Here is a 1031-residue protein sequence, read N- to C-terminus: Exportin-T (1031 aa).

It belongs to the exportin family.

It is found in the nucleus. The protein localises to the cytoplasm. TRNA nucleus export receptor which facilitates tRNA translocation across the nuclear pore complex. Involved in pre-tRNA splicing, probably by affecting the interaction of pre-tRNA with splicing endonuclease. This is Exportin-T (los1) from Emericella nidulans (strain FGSC A4 / ATCC 38163 / CBS 112.46 / NRRL 194 / M139) (Aspergillus nidulans).